A 93-amino-acid polypeptide reads, in one-letter code: Ubiquinol-cytochrome-c reductase complex assembly factor 3 (93 aa).

At 1 to 7 the chain is on the mitochondrial matrix side; it reads MDSLRKM. A helical membrane pass occupies residues 8 to 28; sequence LISVAMLGAGAGVGYALLVIV. Positions 23–80 are mediates lipid-binding; the sequence is ALLVIVTPGERRKQEMLKEMPLQDPRSREEAARTQQLLLATLQEAATTQENVAWRKNW. Residues 29-93 are Mitochondrial intermembrane-facing; that stretch reads TPGERRKQEM…GEGGAGGRSP (65 aa).

The protein belongs to the UQCC3 family. As to quaternary structure, associates with the ubiquinol-cytochrome c reductase complex (mitochondrial respiratory chain complex III or cytochrome b-c1 complex). Interacts with UQCC1. Forms a complex, named COMC, composed of UQCC1, UQCC2; UQCC3 and UQCC4; mediates MT-CYB hemylation and association with the first nuclear-encoded complex III subunit UQCRQ. In terms of processing, probably cleaved by OMA1 under mitochondrial stress conditions.

It is found in the mitochondrion inner membrane. Functionally, required for the assembly of the ubiquinol-cytochrome c reductase complex (mitochondrial respiratory chain complex III or cytochrome b-c1 complex), mediating cytochrome b recruitment and probably stabilization within the complex. Thereby, plays an important role in ATP production by mitochondria. Cardiolipin-binding protein, it may also control the cardiolipin composition of mitochondria membranes and their morphology. This chain is Ubiquinol-cytochrome-c reductase complex assembly factor 3, found in Homo sapiens (Human).